A 111-amino-acid polypeptide reads, in one-letter code: UPF0342 protein gbs1446 (111 aa).

It belongs to the UPF0342 family.

This is UPF0342 protein gbs1446 from Streptococcus agalactiae serotype III (strain NEM316).